Here is a 536-residue protein sequence, read N- to C-terminus: Chaperonin GroEL 2 (536 aa).

ATP contacts are provided by residues 29–32, 86–90, Gly412, and Asp495; these read TLGP and DGTTT.

It belongs to the chaperonin (HSP60) family. In terms of assembly, forms a cylinder of 14 subunits composed of two heptameric rings stacked back-to-back. Interacts with the co-chaperonin GroES.

It is found in the cytoplasm. The enzyme catalyses ATP + H2O + a folded polypeptide = ADP + phosphate + an unfolded polypeptide.. Functionally, together with its co-chaperonin GroES, plays an essential role in assisting protein folding. The GroEL-GroES system forms a nano-cage that allows encapsulation of the non-native substrate proteins and provides a physical environment optimized to promote and accelerate protein folding. The polypeptide is Chaperonin GroEL 2 (Arthrobacter sp. (strain FB24)).